A 480-amino-acid polypeptide reads, in one-letter code: Acyl-lipid (8-3)-desaturase (480 aa).

Residues 1–30 (MAPHSADTAGLVPSDELRLRTSNSKGPEQE) form a disordered region. One can recognise a Cytochrome b5 heme-binding domain in the interval 33 to 107 (LKKYTLEDVS…LAKYCIGELV (75 aa)). Residues H68 and H90 each contribute to the heme site. The next 2 helical transmembrane spans lie at 151–171 (IHPH…ASYY) and 173–193 (AFFW…MGFF). A Histidine box-1 motif is present at residues 203–207 (HDGNH). The Histidine box-2 motif lies at 238-243 (HVVGHH). Helical transmembrane passes span 280-300 (IYLA…DDFL), 322-342 (IFFQ…SVYG), and 348-368 (TFLA…AFLF). The short motif at 419 to 423 (QIEHH) is the Histidine box-3 element.

The protein belongs to the fatty acid desaturase type 1 family. It depends on Fe(2+) as a cofactor.

The protein resides in the membrane. The enzyme catalyses an (8Z,11Z,14Z)-icosatrienoyl-containing glycerolipid + 2 Fe(II)-[cytochrome b5] + O2 + 2 H(+) = (5Z,8Z,11Z,14Z)-eicosatetraenoyl-containing glycerolipid + 2 Fe(III)-[cytochrome b5] + 2 H2O. It catalyses the reaction an (8Z,11Z,14Z,17Z)-eicosatetraenoyl-containing glycerolipid + 2 Fe(II)-[cytochrome b5] + O2 + 2 H(+) = a (5Z,8Z,11Z,14Z,17Z)-eicosapentaenoyl-containing glycerolipid + 2 Fe(III)-[cytochrome b5] + 2 H2O. Functionally, fatty acid desaturase that introduces a cis double bond at the 5-position in 20-carbon polyunsaturated fatty acids incorporated in a glycerolipid that contain a Delta(8) double bond. The polypeptide is Acyl-lipid (8-3)-desaturase (Physcomitrium patens (Spreading-leaved earth moss)).